We begin with the raw amino-acid sequence, 110 residues long: PHD finger-like domain-containing protein 5A (110 aa).

Residue alanine 2 is modified to N-acetylalanine. Lysine 3 carries the post-translational modification N6-acetyllysine. The Zn(2+) site is built by cysteine 11, cysteine 23, cysteine 26, cysteine 30, cysteine 33, cysteine 46, cysteine 49, cysteine 58, cysteine 61, cysteine 72, and cysteine 75. An interaction with SF3B1 and SF3B3 region spans residues 35 to 51 (SYVRPCTLVRICDECNY). The tract at residues 79–82 (EKDR) is interaction with SF3B3. Residue cysteine 85 coordinates Zn(2+). Phosphoserine is present on serine 94.

It belongs to the PHF5 family. In terms of assembly, component of the 17S U2 SnRNP complex, a ribonucleoprotein complex that contains small nuclear RNA (snRNA) U2 and a number of specific proteins. Part of the SF3B subcomplex of the 17S U2 SnRNP complex. SF3B associates with the splicing subcomplex SF3A and a 12S RNA unit to form the U2 small nuclear ribonucleoproteins complex (U2 snRNP). Within the SF3B complex interacts directly with SF3B1 and SF3B3. Component of the minor spliceosome, which splices U12-type introns. Within this complex, interacts with CRIPT. Interacts (via N-terminus) with U2AF1 and SRSF5; acts to bridge the two. Interacts (via C-terminus) with EP400 and DDX1; acts to bridge the two. Interacts with the PAF1 complex (PAF1C) composed of CDC73, PAF1, LEO1, CTR9, RTF1 and SKIC8. Within the PAF1C interacts directly with CDC73 and SKIC8. Interacts with RNA polymerase II. As to expression, expressed in primary spermatocytes (at protein level). Ubiquitously expressed in pre- and postnatal tissues. Highly expressed in pluripotent embryonic stem cells (ESCs) (at protein level) and induced pluripotent stem cells (iPSCs).

Its subcellular location is the nucleus. The protein resides in the nucleus speckle. Functionally, component of the 17S U2 SnRNP complex of the spliceosome, a large ribonucleoprotein complex that removes introns from transcribed pre-mRNAs. The 17S U2 SnRNP complex (1) directly participates in early spliceosome assembly and (2) mediates recognition of the intron branch site during pre-mRNA splicing by promoting the selection of the pre-mRNA branch-site adenosine, the nucleophile for the first step of splicing. Within the 17S U2 SnRNP complex, PHF5A is part of the SF3B subcomplex, which is required for 'A' complex assembly formed by the stable binding of U2 snRNP to the branchpoint sequence in pre-mRNA. Sequence independent binding of SF3A and SF3B subcomplexes upstream of the branch site is essential, it may anchor U2 snRNP to the pre-mRNA. Also acts as a component of the minor spliceosome, which is involved in the splicing of U12-type introns in pre-mRNAs. Also involved in elongation by RNA polymerase II as part of the PAF1 complex (PAF1C). PAF1C is required for maintenance of embryonic stem cell (ESC) self-renewal and cellular reprogramming of stem cells. Maintains pluripotency by recruiting and stabilizing PAF1C on pluripotency genes loci, and by regulating the expression of the pluripotency genes. Regulates the deposition of elongation-associated histone modifications, including dimethylated histone H3 'Lys-79' (H3K79me2) and trimethylated histone H3 'Lys-36' (H3K36me3), on PAF1C targets, self-renewal and pluripotency genes. Regulates RNA polymerase II promoter-proximal pause release of the PAF1C targets and self-renewal genes, and the levels of elongating ('Ser-2' phosphorylated) RNA polymerase II in their gene bodies. Regulates muscle specification in adult stem cells by stabilizing PAF1C in chromatin to promote myogenic differentiation. Acts as a transcriptional regulator by binding to the GJA1/Cx43 promoter and enhancing its up-regulation by ESR1/ER-alpha. The chain is PHD finger-like domain-containing protein 5A (Phf5a) from Mus musculus (Mouse).